A 186-amino-acid chain; its full sequence is Nascent polypeptide-associated complex subunit beta (186 aa).

One can recognise an NAC-A/B domain in the interval 65 to 130 (GADDKKLQTT…GEEKELTELV (66 aa)). The tract at residues 153–186 (QNMQKQAGAEGKKDEDEDDIPDLVEGENFESNVE) is disordered. Residues 167 to 186 (EDEDDIPDLVEGENFESNVE) are compositionally biased toward acidic residues.

Belongs to the NAC-beta family. As to quaternary structure, part of the nascent polypeptide-associated complex (NAC), consisting of egd2 and egd1. NAC associates with ribosomes via egd1.

It is found in the cytoplasm. The protein resides in the nucleus. Its function is as follows. Component of the nascent polypeptide-associated complex (NAC), a dynamic component of the ribosomal exit tunnel, protecting the emerging polypeptides from interaction with other cytoplasmic proteins to ensure appropriate nascent protein targeting. The NAC complex also promotes mitochondrial protein import by enhancing productive ribosome interactions with the outer mitochondrial membrane and blocks the inappropriate interaction of ribosomes translating non-secretory nascent polypeptides with translocation sites in the membrane of the endoplasmic reticulum. EGD1 may act as a transcription factor that exert a negative effect on the expression of several genes that are transcribed by RNA polymerase II. This chain is Nascent polypeptide-associated complex subunit beta (egd1), found in Aspergillus fumigatus (strain ATCC MYA-4609 / CBS 101355 / FGSC A1100 / Af293) (Neosartorya fumigata).